A 450-amino-acid chain; its full sequence is ADP-specific phosphofructokinase (450 aa).

The ADPK domain occupies 1–449 (MIPEHLSIYT…FLTYLEFLKR (449 aa)). 3 residues coordinate Mg(2+): E260, E290, and D433. The active-site Proton acceptor is D433.

It belongs to the carbohydrate kinase PfkC family. It depends on Mg(2+) as a cofactor.

Its subcellular location is the cytoplasm. It carries out the reaction beta-D-fructose 6-phosphate + ADP = beta-D-fructose 1,6-bisphosphate + AMP + H(+). Its pathway is carbohydrate degradation; glycolysis. Its function is as follows. Catalyzes the phosphorylation of fructose 6-phosphate to fructose 1,6-bisphosphate using ADP as the phosphate donor. In Pyrococcus horikoshii (strain ATCC 700860 / DSM 12428 / JCM 9974 / NBRC 100139 / OT-3), this protein is ADP-specific phosphofructokinase.